Consider the following 142-residue polypeptide: MADFKLVVSDPKTGKAYNVDVTGPRVNKFIGKPIGSEIDGETAGLPGYKLIITGGSDKDGIPMRGDIPGQVRRRVLVSGGIGYHPTENGMRRRKLLRGDEISAEIVQVNATVAAYGEKPLDELAPKKEKKEGAAGGRAPAKK.

Residues 117–142 (EKPLDELAPKKEKKEGAAGGRAPAKK) form a disordered region. Residues 118 to 132 (KPLDELAPKKEKKEG) are compositionally biased toward basic and acidic residues.

The protein belongs to the eukaryotic ribosomal protein eS6 family.

This Methanocella arvoryzae (strain DSM 22066 / NBRC 105507 / MRE50) protein is Small ribosomal subunit protein eS6.